Here is a 262-residue protein sequence, read N- to C-terminus: MDQPVLLTGAGGRVGQAILGHIGDAYDWRLLDREPLSDEKIPDSVDSTEVYVADVTDETAVRNAMDGVHAVIHLAGDPRPEAPWDSVLRNNIDGTQQMFDAAVDVGVEKFAFASSNHAVGAYETTDRTPDMYRPHHEFRLDGTELPRPSNLYGVSKAAGETLGRYYHDHHDISVVNVRIGNLTQHHPPKEYERGQAMWLSYRDCGHLFECCIEADYDYEIVYGISDNDRKYYSIDRARAVLGYDPQDNSAEFTFEGEPLDEA.

Residues asparagine 90, serine 115, tyrosine 152, and lysine 156 each coordinate NAD(+). Residue tyrosine 152 is the Proton acceptor of the active site.

Belongs to the NAD(P)-dependent epimerase/dehydratase family. Homodimer.

It catalyses the reaction D-glucose 6-phosphate + NAD(+) = 6-phospho-D-glucono-1,5-lactone + NADH + H(+). It participates in carbohydrate degradation; pentose phosphate pathway. In terms of biological role, catalyzes the NAD-dependent oxidation of glucose 6-phosphate to 6-phosphogluconolactone. This Haloferax volcanii (strain ATCC 29605 / DSM 3757 / JCM 8879 / NBRC 14742 / NCIMB 2012 / VKM B-1768 / DS2) (Halobacterium volcanii) protein is NAD-dependent glucose-6-phosphate dehydrogenase.